The following is a 525-amino-acid chain: Phosphoenolpyruvate carboxykinase (ATP) (525 aa).

Substrate contacts are provided by Arg52, Tyr186, and Lys192. Residues Lys192, His211, and 228-236 (GLSGTGKTT) contribute to the ATP site. 2 residues coordinate Mn(2+): Lys192 and His211. Asp249 is a Mn(2+) binding site. Residues Glu277, Arg314, 433-434 (RI), and Thr439 contribute to the ATP site. Position 314 (Arg314) interacts with substrate.

The protein belongs to the phosphoenolpyruvate carboxykinase (ATP) family. Mn(2+) is required as a cofactor.

It is found in the cytoplasm. It carries out the reaction oxaloacetate + ATP = phosphoenolpyruvate + ADP + CO2. It functions in the pathway carbohydrate biosynthesis; gluconeogenesis. Involved in the gluconeogenesis. Catalyzes the conversion of oxaloacetate (OAA) to phosphoenolpyruvate (PEP) through direct phosphoryl transfer between the nucleoside triphosphate and OAA. The protein is Phosphoenolpyruvate carboxykinase (ATP) of Fusobacterium nucleatum subsp. nucleatum (strain ATCC 25586 / DSM 15643 / BCRC 10681 / CIP 101130 / JCM 8532 / KCTC 2640 / LMG 13131 / VPI 4355).